The sequence spans 60 residues: Large ribosomal subunit protein bL32 (60 aa).

The segment at 1 to 28 (MAVQQNKKSRSKRDMRRSHDALTGPTLS) is disordered. Residues 7-16 (KKSRSKRDMR) show a composition bias toward basic residues.

It belongs to the bacterial ribosomal protein bL32 family.

This is Large ribosomal subunit protein bL32 from Cellvibrio japonicus (strain Ueda107) (Pseudomonas fluorescens subsp. cellulosa).